Here is a 227-residue protein sequence, read N- to C-terminus: Phosphoribosylformylglycinamidine synthase subunit PurQ (227 aa).

The Glutamine amidotransferase type-1 domain occupies 3–225; that stretch reads FAVIVFPGSN…LKQWRETYVV (223 aa). Residue C86 is the Nucleophile of the active site. Active-site residues include H194 and E196.

In terms of assembly, part of the FGAM synthase complex composed of 1 PurL, 1 PurQ and 2 PurS subunits.

Its subcellular location is the cytoplasm. It catalyses the reaction N(2)-formyl-N(1)-(5-phospho-beta-D-ribosyl)glycinamide + L-glutamine + ATP + H2O = 2-formamido-N(1)-(5-O-phospho-beta-D-ribosyl)acetamidine + L-glutamate + ADP + phosphate + H(+). The enzyme catalyses L-glutamine + H2O = L-glutamate + NH4(+). The protein operates within purine metabolism; IMP biosynthesis via de novo pathway; 5-amino-1-(5-phospho-D-ribosyl)imidazole from N(2)-formyl-N(1)-(5-phospho-D-ribosyl)glycinamide: step 1/2. Part of the phosphoribosylformylglycinamidine synthase complex involved in the purines biosynthetic pathway. Catalyzes the ATP-dependent conversion of formylglycinamide ribonucleotide (FGAR) and glutamine to yield formylglycinamidine ribonucleotide (FGAM) and glutamate. The FGAM synthase complex is composed of three subunits. PurQ produces an ammonia molecule by converting glutamine to glutamate. PurL transfers the ammonia molecule to FGAR to form FGAM in an ATP-dependent manner. PurS interacts with PurQ and PurL and is thought to assist in the transfer of the ammonia molecule from PurQ to PurL. The chain is Phosphoribosylformylglycinamidine synthase subunit PurQ from Bacillus mycoides (strain KBAB4) (Bacillus weihenstephanensis).